The primary structure comprises 590 residues: Laccase-19 (590 aa).

Residues 1–28 (MEKLSMVTSLLCAITVAVLAVAVVSGEA) form the signal peptide. 2 Plastocyanin-like domains span residues 36-152 (VVHE…PRDG) and 161-315 (KDVP…YAGT). Residues Asn41 and Asn47 are each glycosylated (N-linked (GlcNAc...) asparagine). Cu cation contacts are provided by His86 and His88. N-linked (GlcNAc...) asparagine glycosylation is present at Asn120. Cu cation is bound by residues His131 and His133. N-linked (GlcNAc...) asparagine glycans are attached at residues Asn205, Asn344, Asn378, Asn397, Asn434, and Asn465. In terms of domain architecture, Plastocyanin-like 3 spans 424 to 566 (DFPIRPPRPF…ATAFIVEDGP (143 aa)). Residues Asn483, His486, His488, His545, Cys546, His547, His551, and Met556 each contribute to the Cu cation site. A disordered region spans residues 565–590 (GPTPETSLPPPPPEFKRCGNNGLSQP).

It belongs to the multicopper oxidase family. Requires Cu cation as cofactor.

It is found in the secreted. The protein resides in the extracellular space. Its subcellular location is the apoplast. It carries out the reaction 4 hydroquinone + O2 = 4 benzosemiquinone + 2 H2O. Its function is as follows. Lignin degradation and detoxification of lignin-derived products. This is Laccase-19 (LAC19) from Oryza sativa subsp. japonica (Rice).